Here is an 84-residue protein sequence, read N- to C-terminus: RNA-binding protein Hfq (84 aa).

Positions 10–69 (DPFLNILRKERIPVSIYLVNGIKLQGQIDSFDQYVVLLKNSVTQMVYKHAISTIVPAKAI) constitute a Sm domain.

This sequence belongs to the Hfq family. In terms of assembly, homohexamer.

RNA chaperone that binds small regulatory RNA (sRNAs) and mRNAs to facilitate mRNA translational regulation in response to envelope stress, environmental stress and changes in metabolite concentrations. Also binds with high specificity to tRNAs. The chain is RNA-binding protein Hfq from Nitrosomonas europaea (strain ATCC 19718 / CIP 103999 / KCTC 2705 / NBRC 14298).